An 86-amino-acid chain; its full sequence is High affinity immunoglobulin epsilon receptor subunit gamma (86 aa).

Residues 1-18 (MIPAVILFLLLLVEEAAA) form the signal peptide. The Extracellular segment spans residues 19-23 (LGEPQ). A helical membrane pass occupies residues 24–44 (LCYILDAILFLYGIVLTLLYC). The Cytoplasmic portion of the chain corresponds to 45–86 (RLKIQVRKADIASREKSDAVYTGLNTRNQETYETLKHEKPPQ). The ITAM domain occupies 54–82 (DIASREKSDAVYTGLNTRNQETYETLKHE). A phosphotyrosine mark is found at tyrosine 65 and tyrosine 76. Phosphothreonine is present on threonine 78.

Belongs to the CD3Z/FCER1G family. In terms of assembly, igE Fc receptor is a tetramer of an alpha chain, a beta chain, and two disulfide linked gamma chains. Associates with FCGR1A to form a functional receptor complex. The signaling subunit of immunoglobulin gamma (IgG) Fc receptor complex. As a homodimer or a heterodimer of CD247 and FCER1G, associates with the ligand binding subunit FCGR3A to form a functional receptor complex. Associates with CLEC6A. Interacts with CLEC4E. Interacts (via ITAM domain) with SYK (via SH2 domains); activates SYK, enabling integrin-mediated activation of neutrophils and macrophages. Interacts with common beta chain of interleukin 3 receptor CSF2RB and recruits SYK in response to IL3 stimulation; this interaction is direct. Interacts with CD300LH; the interaction may be indirect. Interacts with CD300LD. Interacts with TARM1. Expressed in leukocytes and pinealocytes. Expression in the pineal gland does not undergo circadian variations.

The protein localises to the cell membrane. Functionally, adapter protein containing an immunoreceptor tyrosine-based activation motif (ITAM) that transduces activation signals from various immunoreceptors. As a component of the high-affinity immunoglobulin E (IgE) receptor, mediates allergic inflammatory signaling in mast cells. As a constitutive component of interleukin-3 receptor complex, selectively mediates interleukin 4/IL4 production by basophils priming T-cells toward effector T-helper 2 subset. Associates with pattern recognition receptors CLEC4D and CLEC4E to form a functional signaling complex in myeloid cells. Binding of mycobacterial trehalose 6,6'-dimycolate (TDM) to this receptor complex leads to phosphorylation of ITAM, triggering activation of SYK, CARD9 and NF-kappa-B, consequently driving maturation of antigen-presenting cells and shaping antigen-specific priming of T-cells toward effector T-helper 1 and T-helper 17 cell subtypes. May function cooperatively with other activating receptors. Functionally linked to integrin beta-2/ITGB2-mediated neutrophil activation. Also involved in integrin alpha-2/ITGA2-mediated platelet activation. In Rattus norvegicus (Rat), this protein is High affinity immunoglobulin epsilon receptor subunit gamma (Fcer1g).